Reading from the N-terminus, the 39-residue chain is Cytochrome b559 subunit beta (39 aa).

The chain crosses the membrane as a helical span at residues Trp14–Ser30. His18 provides a ligand contact to heme.

This sequence belongs to the PsbE/PsbF family. Heterodimer of an alpha subunit and a beta subunit. PSII is composed of 1 copy each of membrane proteins PsbA, PsbB, PsbC, PsbD, PsbE, PsbF, PsbH, PsbI, PsbJ, PsbK, PsbL, PsbM, PsbT, PsbX, PsbY, PsbZ, Psb30/Ycf12, at least 3 peripheral proteins of the oxygen-evolving complex and a large number of cofactors. It forms dimeric complexes. The cofactor is heme b.

It is found in the plastid. Its subcellular location is the chloroplast thylakoid membrane. This b-type cytochrome is tightly associated with the reaction center of photosystem II (PSII). PSII is a light-driven water:plastoquinone oxidoreductase that uses light energy to abstract electrons from H(2)O, generating O(2) and a proton gradient subsequently used for ATP formation. It consists of a core antenna complex that captures photons, and an electron transfer chain that converts photonic excitation into a charge separation. The sequence is that of Cytochrome b559 subunit beta from Cedrus deodara (Deodar cedar).